Consider the following 314-residue polypeptide: Ribosomal RNA small subunit methyltransferase H (314 aa).

Residues 36-38, D56, F83, D104, and Q111 each bind S-adenosyl-L-methionine; that span reads AGH.

It belongs to the methyltransferase superfamily. RsmH family.

The protein localises to the cytoplasm. The enzyme catalyses cytidine(1402) in 16S rRNA + S-adenosyl-L-methionine = N(4)-methylcytidine(1402) in 16S rRNA + S-adenosyl-L-homocysteine + H(+). Functionally, specifically methylates the N4 position of cytidine in position 1402 (C1402) of 16S rRNA. The sequence is that of Ribosomal RNA small subunit methyltransferase H from Brevibacillus brevis (strain 47 / JCM 6285 / NBRC 100599).